Here is a 176-residue protein sequence, read N- to C-terminus: Baseplate protein I (176 aa).

The protein belongs to the P2likevirus gpI protein family.

The protein localises to the virion. Functionally, baseplate protein that may be part of the wedges of the baseplate. Plays a role in tail assembly. The polypeptide is Baseplate protein I (I) (Escherichia phage P2 (Bacteriophage P2)).